The sequence spans 92 residues: Translation initiation factor IF-1 (92 aa).

The S1-like domain occupies 1-72 (MAKEELIQFE…EKGRLIFRHK (72 aa)). Residues 69–92 (FRHKDERPGGPPRSGPPRGQFRRR) form a disordered region.

The protein belongs to the IF-1 family. As to quaternary structure, component of the 30S ribosomal translation pre-initiation complex which assembles on the 30S ribosome in the order IF-2 and IF-3, IF-1 and N-formylmethionyl-tRNA(fMet); mRNA recruitment can occur at any time during PIC assembly.

It is found in the cytoplasm. In terms of biological role, one of the essential components for the initiation of protein synthesis. Stabilizes the binding of IF-2 and IF-3 on the 30S subunit to which N-formylmethionyl-tRNA(fMet) subsequently binds. Helps modulate mRNA selection, yielding the 30S pre-initiation complex (PIC). Upon addition of the 50S ribosomal subunit IF-1, IF-2 and IF-3 are released leaving the mature 70S translation initiation complex. This Rhodopseudomonas palustris (strain ATCC BAA-98 / CGA009) protein is Translation initiation factor IF-1.